The following is a 164-amino-acid chain: Mineralocorticoid receptor (164 aa).

Residues 1 to 162 (QYSWMCLSSF…EFPRCWWRSS (162 aa)) enclose the NR LBD domain. 21-hydroxyprogesterone-binding residues include arginine 15 and threonine 143. Aldosterone-binding residues include arginine 15 and threonine 143. The progesterone site is built by arginine 15 and threonine 143.

It belongs to the nuclear hormone receptor family. NR3 subfamily. As to quaternary structure, heteromultimeric cytoplasmic complex with HSP90, HSP70, and FKBP4, in the absence of ligand. After ligand binding, it translocates to the nucleus and binds to DNA as a homodimer and as a heterodimer with NR3C1. Binds the coactivator NCOA2. May interact with HSD11B2 in the absence of ligand. Binds the coactivators NCOA1, TIF1 and NRIP1. Phosphorylated.

It is found in the cytoplasm. It localises to the nucleus. Its subcellular location is the endoplasmic reticulum membrane. Receptor for both mineralocorticoids (MC) such as aldosterone and glucocorticoids (GC) such as corticosterone or cortisol. Binds to mineralocorticoid response elements (MRE) and transactivates target genes. The effect of MC is to increase ion and water transport and thus raise extracellular fluid volume and blood pressure and lower potassium levels. This Sus scrofa (Pig) protein is Mineralocorticoid receptor (NR3C2).